Here is a 438-residue protein sequence, read N- to C-terminus: Carboxypeptidase A6 (438 aa).

An N-terminal signal peptide occupies residues 1–30 (MNFLGNPRSHTAAFLPVCWLLLNILKPGHC). Positions 31–129 (HSYDNRYAGD…NSLQTQRNRR (99 aa)) are cleaved as a propeptide — activation peptide. Residues N89 and N153 are each glycosylated (N-linked (GlcNAc...) asparagine). A Peptidase M14 domain is found at 138–433 (VYHSLEDIQS…LAVKNITMHL (296 aa)). Zn(2+) contacts are provided by H197 and E200. Residues 197–200 (HARE), R255, and 272–273 (NR) each bind substrate. C266 and C289 are oxidised to a cystine. Residue H325 coordinates Zn(2+). Residue 326-327 (AY) participates in substrate binding. N344 carries an N-linked (GlcNAc...) asparagine glycan. Y377 contacts substrate. E399 serves as the catalytic Proton donor/acceptor. N-linked (GlcNAc...) asparagine glycosylation is present at N428.

It belongs to the peptidase M14 family. Zn(2+) is required as a cofactor. In terms of tissue distribution, in brain, highly expressed in the olfactory bulb with lower levels in other regions including cerebral cortex, hippocampus, hypothalamus, striatum and medulla. Within the olfactory bulb, highest levels occur in the mitral and granular layers with lower levels in the internal and external plexiform layers. Moderate levels are found in the epididymis with low levels in colon and spleen. Not detected in adrenal, liver, lung, ovary or testis. At embryonic day 14.5, enriched in eye, ear, osteoblasts, stomach, skin, dorsal root ganglia and throughout the CNS.

It localises to the secreted. The protein resides in the extracellular space. It is found in the extracellular matrix. In terms of biological role, may be involved in the proteolytic inactivation of enkephalins and neurotensin in some brain areas. May convert inactive angiotensin I into the biologically active angiotensin II. Releases a C-terminal amino acid, with preference for large hydrophobic C-terminal amino acids and shows only very weak activity toward small amino acids and histidine. This is Carboxypeptidase A6 (Cpa6) from Mus musculus (Mouse).